The chain runs to 1233 residues: Hemocyanin A-type, units Ode to Odg (1233 aa).

Positions 1-4 are ODD; sequence EGNE. The ODE stretch occupies residues 5 to 422; the sequence is YLVRKNVERL…KQDADIDIPL (418 aa). His45 provides a ligand contact to Cu cation. Cys51 and Cys62 are joined by a disulfide. Residues 63–65 constitute a cross-link (2'-(S-cysteinyl)-histidine (Cys-His)); it reads CLH. His65, His74, His186, His190, and His217 together coordinate Cu cation. Disulfide bonds link Cys176-Cys243 and Cys334-Cys340. N-linked (GlcNAc...) asparagine glycosylation is present at Asn392. Residues 423–839 are ODF; the sequence is NHIRRNVESL…KEIEKEAVRG (417 aa). A Cu cation-binding site is contributed by His463. Cysteines 468 and 478 form a disulfide. The segment at residues 479–481 is a cross-link (2'-(S-cysteinyl)-histidine (Cys-His)); the sequence is CLH. 2 residues coordinate Cu cation: His481 and His490. Asn538 is a glycosylation site (N-linked (GlcNAc...) asparagine). 2 disulfide bridges follow: Cys589–Cys656 and Cys743–Cys748. Cu cation contacts are provided by His599, His603, and His630. An ODG region spans residues 840 to 1233; it reads TIIRKNVNSL…VFLAPAKTTH (394 aa). His880 is a Cu cation binding site. Cys886 and Cys896 are oxidised to a cystine. An N-linked (GlcNAc...) asparagine glycan is attached at Asn890. Residues 897–899 constitute a cross-link (2'-(S-cysteinyl)-histidine (Cys-His)); it reads CQH. Positions 899, 908, 1008, 1012, and 1039 each coordinate Cu cation. Intrachain disulfides connect Cys998–Cys1065 and Cys1152–Cys1158.

It belongs to the tyrosinase family. Hemocyanin subfamily. In terms of assembly, decamers of large identical subunits (350 kDa), each containing 7 globular oxygen-binding domains: ODA, ODB, ODC, ODD, ODE, ODF, and ODG. It depends on Cu(2+) as a cofactor.

Functionally, hemocyanins are copper-containing oxygen carriers occurring freely dissolved in the hemolymph of many mollusks and arthropods. The polypeptide is Hemocyanin A-type, units Ode to Odg (Enteroctopus dofleini (North Pacific giant octopus)).